A 185-amino-acid polypeptide reads, in one-letter code: Peptidyl-tRNA hydrolase (185 aa).

Phenylalanine 14 provides a ligand contact to tRNA. Histidine 19 (proton acceptor) is an active-site residue. TRNA contacts are provided by tyrosine 64, asparagine 66, and asparagine 112.

It belongs to the PTH family. As to quaternary structure, monomer.

It is found in the cytoplasm. It carries out the reaction an N-acyl-L-alpha-aminoacyl-tRNA + H2O = an N-acyl-L-amino acid + a tRNA + H(+). Functionally, hydrolyzes ribosome-free peptidyl-tRNAs (with 1 or more amino acids incorporated), which drop off the ribosome during protein synthesis, or as a result of ribosome stalling. In terms of biological role, catalyzes the release of premature peptidyl moieties from peptidyl-tRNA molecules trapped in stalled 50S ribosomal subunits, and thus maintains levels of free tRNAs and 50S ribosomes. In Exiguobacterium sp. (strain ATCC BAA-1283 / AT1b), this protein is Peptidyl-tRNA hydrolase.